The primary structure comprises 1761 residues: Nonribosomal peptide synthetase 6 (1761 aa).

The tract at residues 63–468 is adenylation; sequence ERAALHPEKI…GRQDQQVKLR (406 aa). The 76-residue stretch at 600–675 folds into the Carrier 1 domain; the sequence is EATTEMELKL…AMAEKAKPVS (76 aa). Ser-636 is subject to O-(pantetheine 4'-phosphoryl)serine. The segment at 712–1135 is condensation 1; that stretch reads VEDVYPCTPL…AVLDPAEARD (424 aa). 2 Carrier domains span residues 1169–1242 and 1237–1313; these read SPNE…SNER and SASN…EEEM. O-(pantetheine 4'-phosphoryl)serine is present on residues Ser-1203 and Ser-1274. Residues 1354 to 1677 are condensation 2; sequence IYPTRPLQQL…DKVQWFDTVV (324 aa).

It belongs to the NRP synthetase family.

Its pathway is siderophore biosynthesis. Its function is as follows. NRPS involved in extracellular coprogen-type siderophores biosynthesis including coprogen, neocoprogen I and neocoprogen II. The role of extracellular siderophores in fungal virulence to plants is to supply iron to the fungus during plant infection, but not to act as phytotoxins, depriving their hosts of iron. The protein is Nonribosomal peptide synthetase 6 of Cochliobolus miyabeanus (Brown spot disease fungus).